The chain runs to 338 residues: MSNNDLLNYYHRANELVFKGLIEFSCMKAAIELDLFSHMAEGPKDLATLAADTGSVPPRLEMLLETLRQMRVINLEDGKWSLTEFADYMFSPTPKEPNLHQTPVAKAMAFLADDFYMGLSQAVRGQKNFKGQVPYPPVTREDNLYFEEIHRSNAKFAIQLLLEEAKLDGVKKMIDVGGGIGDISAAMLKHFPELDSTILNLPGAIDLVNENAAEKGVADRMRGIAVDIYKESYPEADAVLFCRILYSANEQLSTIMCKKAFDAMRSGGRLLILDMVIDDPENPNFDYLSHYILGAGMPFSVLGFKEQARYKEILESLGYKDVTMVRKYDHLLVQAVKP.

Glutamate 147 serves as a coordination point for S-adenosyl-L-methionine. Residue histidine 150 participates in substrate binding. Residues glycine 177, asparagine 200, 227–228 (DI), and 242–243 (CR) each bind S-adenosyl-L-methionine. Tyrosine 246 acts as the Nucleophile in catalysis. Residue histidine 290 coordinates a bacteriochlorophyll d.

The protein belongs to the class I-like SAM-binding methyltransferase superfamily. Cation-independent O-methyltransferase family. In terms of assembly, homodimer.

It catalyses the reaction a bacteriochlorophyllide d + S-adenosyl-L-methionine = a bacteriochlorophyllide c + S-adenosyl-L-homocysteine + H(+). It participates in porphyrin-containing compound metabolism; bacteriochlorophyll biosynthesis (light-independent). Its function is as follows. Involved in the biosynthesis of the major light-harvesting pigment bacteriochlorophyll c (BChlc), which confers a significant competitive advantage to green sulfur bacteria living at limiting red and near-infrared light intensities. Catalyzes the methylation at the C-20 position of the cyclic tetrapyrrole chlorin of bacteriochlorophyll d (BChld) to produce bacteriochlorophyll c (BChlc) using S-adenosylmethionine (SAM) as a methyl source. This chain is Bacteriochlorophyllide d C-20 methyltransferase, found in Chlorobaculum tepidum (strain ATCC 49652 / DSM 12025 / NBRC 103806 / TLS) (Chlorobium tepidum).